The chain runs to 619 residues: (-)-camphene synthase, chloroplastic (619 aa).

The transit peptide at 1 to 47 (MALVSVAPLVSMRRSLFSSPYELKSIDKTIPNLVMCRKRMSGTPSIR) directs the protein to the chloroplast. 3 residues coordinate Mg(2+): Asp370, Asp374, and Asp522. The short motif at 370 to 374 (DDIYD) is the DDXXD motif element.

The protein belongs to the terpene synthase family. Tpsd subfamily. Mg(2+) is required as a cofactor. Requires Mn(2+) as cofactor.

It localises to the plastid. Its subcellular location is the chloroplast. The enzyme catalyses (2E)-geranyl diphosphate = (1S,4R)-camphene + diphosphate. The catalysed reaction is (2E)-geranyl diphosphate = (1R,5R)-alpha-pinene + diphosphate. It carries out the reaction (2E)-geranyl diphosphate = tricyclene + diphosphate. It catalyses the reaction (2E)-geranyl diphosphate = beta-myrcene + diphosphate. The enzyme catalyses (2E)-geranyl diphosphate = (1S,5S)-beta-pinene + diphosphate. The catalysed reaction is (2E)-geranyl diphosphate = (1S,5S)-alpha-pinene + diphosphate. It functions in the pathway terpene metabolism; oleoresin biosynthesis. The protein operates within secondary metabolite biosynthesis; terpenoid biosynthesis. Its function is as follows. Monoterpene synthase (TPS) involved in the biosynthesis of monoterpene natural products included in conifer oleoresin secretions and volatile emissions; these compounds contribute to biotic and abiotic stress defense against herbivores and pathogens. Catalyzes the conversion of (2E)-geranyl diphosphate (GPP) to (-)-camphene, (+)-alpha-pinene and (-)-alpha-pinene, and, to a lower extent, to tricyclene, myrcene and (-)-beta-pinene. This is (-)-camphene synthase, chloroplastic from Pinus contorta (Shore pine).